The sequence spans 151 residues: Ribosome maturation factor RimP (151 aa).

Belongs to the RimP family.

It is found in the cytoplasm. In terms of biological role, required for maturation of 30S ribosomal subunits. The polypeptide is Ribosome maturation factor RimP (Hydrogenovibrio crunogenus (strain DSM 25203 / XCL-2) (Thiomicrospira crunogena)).